Reading from the N-terminus, the 581-residue chain is Spastin (581 aa).

A compositionally biased stretch (basic residues) spans M1 to G12. A disordered region spans residues M1–A39. The tract at residues M1–L48 is required for nuclear localization. The Cytoplasmic portion of the chain corresponds to M1–P54. The segment at M1 to Q78 is required for interaction with ATL1. Positions M1–L191 are required for midbody localization. The interval M1–K265 is required for interaction with RTN1. The Nuclear localization signal motif lies at P4–K11. Residues P20–A39 show a composition bias toward pro residues. A required for interaction with SSNA1 and microtubules region spans residues L48–M85. The segment at residues L55–W75 is an intramembrane region (helical). Positions V57 to L65 match the Nuclear export signal motif. Topologically, residues L76–V581 are cytoplasmic. The disordered stretch occupies residues S90–A111. Positions P97–G106 are enriched in pro residues. Residues H118 to L192 form the MIT domain. Positions E193–V581 are sufficient for microtubule severing. The tract at residues G195–K277 is disordered. Positions H206–L225 are enriched in polar residues. Phosphoserine is present on residues S210 and S233. The required for interaction with microtubules and microtubule severing stretch occupies residues S235 to I293. Polar residues predominate over residues H254–T271. Phosphothreonine is present on T271. A Nuclear localization signal motif is present at residues R274 to K277. Position 347 to 354 (G347 to T354) interacts with ATP. At S562 the chain carries Phosphoserine.

It belongs to the AAA ATPase family. Spastin subfamily. As to quaternary structure, homohexamer. Mostly monomeric, but assembles into hexameric structure for short periods of time. Oligomerization seems to be a prerequisite for catalytic activity. Binding to ATP in a cleft between two adjacent subunits stabilizes the homohexameric form. Binds to microtubules at least in part via the alpha-tubulin and beta-tubulin tails. The hexamer adopts a ring conformation through which microtubules pass prior to being severed. Does not interact strongly with tubulin heterodimers. Interacts (via MIT domain) with CHMP1B; the interaction is direct. Interacts with SSNA1. Interacts with ATL1. Interacts with RTN1. Interacts with ZFYVE27. Interacts with REEP1. Interacts (via MIT domain) with IST1.

Its subcellular location is the membrane. The protein localises to the endoplasmic reticulum. The protein resides in the midbody. It is found in the cytoplasm. It localises to the cytoskeleton. Its subcellular location is the microtubule organizing center. The protein localises to the centrosome. The protein resides in the perinuclear region. It is found in the nucleus. It localises to the spindle. Its subcellular location is the cell projection. The protein localises to the axon. It catalyses the reaction n ATP + n H2O + a microtubule = n ADP + n phosphate + (n+1) alpha/beta tubulin heterodimers.. Allosteric enzyme with a cooperative mechanism; at least two neighbor subunits influence each other strongly in spastin hexamers. Microtubule binding promotes cooperative interactions among spastin subunits. In terms of biological role, ATP-dependent microtubule severing protein that specifically recognizes and cuts microtubules that are polyglutamylated. Preferentially recognizes and acts on microtubules decorated with short polyglutamate tails: severing activity increases as the number of glutamates per tubulin rises from one to eight, but decreases beyond this glutamylation threshold. Severing activity is not dependent on tubulin acetylation or detyrosination. Microtubule severing promotes reorganization of cellular microtubule arrays and the release of microtubules from the centrosome following nucleation. It is critical for the biogenesis and maintenance of complex microtubule arrays in axons, spindles and cilia. SPAST is involved in abscission step of cytokinesis and nuclear envelope reassembly during anaphase in cooperation with the ESCRT-III complex. Recruited at the midbody, probably by IST1, and participates in membrane fission during abscission together with the ESCRT-III complex. Recruited to the nuclear membrane by IST1 and mediates microtubule severing, promoting nuclear envelope sealing and mitotic spindle disassembly during late anaphase. Required for membrane traffic from the endoplasmic reticulum (ER) to the Golgi and endosome recycling. Recruited by IST1 to endosomes and regulates early endosomal tubulation and recycling by mediating microtubule severing. Probably plays a role in axon growth and the formation of axonal branches. The chain is Spastin from Rattus norvegicus (Rat).